A 910-amino-acid polypeptide reads, in one-letter code: DNA repair and recombination protein RAD54B (910 aa).

Polar residues predominate over residues 1–14 (MRRSAAPSQLQGNS). The disordered stretch occupies residues 1–33 (MRRSAAPSQLQGNSFKKPKFIPPGRSNPGLNEE). S14 is subject to Phosphoserine. In terms of domain architecture, Helicase ATP-binding spans 313–480 (GMRMNGRCGA…FALIDFVNPG (168 aa)). 326 to 333 (DEMGLGKT) lines the ATP pocket. The DEGH box signature appears at 431-434 (DEGH). One can recognise a Helicase C-terminal domain in the interval 649 to 810 (KLLAVIHELR…HIQFSVEELK (162 aa)).

The protein belongs to the SNF2/RAD54 helicase family. Interacts with RAD51 through the NH2-terminal domain. Immunoprecipitation experiments show that the interaction is constitutive and not induced by ionizing radiation. The interaction may be indirect. Abundantly expressed in testis and spleen. Relatively low levels observed in thymus, prostate, ovary and colon.

It localises to the nucleus. In terms of biological role, involved in DNA repair and mitotic recombination. May play an active role in recombination processes in concert with other members of the RAD52 epistasis group. The chain is DNA repair and recombination protein RAD54B (RAD54B) from Homo sapiens (Human).